The sequence spans 155 residues: Ribosomal RNA large subunit methyltransferase H (155 aa).

S-adenosyl-L-methionine-binding positions include Leu73, Gly104, and 123–128 (LSPLTL).

The protein belongs to the RNA methyltransferase RlmH family. As to quaternary structure, homodimer.

The protein localises to the cytoplasm. The catalysed reaction is pseudouridine(1915) in 23S rRNA + S-adenosyl-L-methionine = N(3)-methylpseudouridine(1915) in 23S rRNA + S-adenosyl-L-homocysteine + H(+). Specifically methylates the pseudouridine at position 1915 (m3Psi1915) in 23S rRNA. The protein is Ribosomal RNA large subunit methyltransferase H of Pseudomonas savastanoi pv. phaseolicola (strain 1448A / Race 6) (Pseudomonas syringae pv. phaseolicola (strain 1448A / Race 6)).